We begin with the raw amino-acid sequence, 524 residues long: MKFVNIYEIQRFDGQPTRHGIAPKKIFRSKYIPTGLVPRLKYWRDVPSRAEMSKRIGKYFEDEFKFYPNEEKLNEAVNIVQEKWISHYGTSLNVTSVSESFRTLPKSTSAGLPFKSGCTKYEARNKMMRFARSQWDRVSKELQLQVLPCRLGARCQLRKRGENKPRLIWAYPGYLSIIENQYLTAIKKVPPPNFIGWSTNWLDGGKSLNRLLFGDKWTWQSIAQIDFSSFDATVRTELIFHAFKILRSLFDLTRTENIMLDQLRHYFINTPILFYDKIIVKNRGIPSGSAFTQIIGTIVNMIACQYASLRSRDYNLRIPFSCWLGDDSFLNFETALCRQEFEYDYLEKFKELGLNVSIDKTHYTTRFIDDFEVRFKGVRPYVKFLGKQIDILLDLTFHNDLDKLDAQMALPEKEDLSAYETGVRLIGLVWAYGAHYDIYLRILKVYLSLKLKPEFHVQQLLSYSEKPERTKRYQENFFSSMKYQLNLDLDIYDLLAFPKFWDVSNRYFGSKYERLDFRSHKIYG.

One can recognise a RdRp catalytic domain in the interval 220–340; sequence QSIAQIDFSS…NFETALCRQE (121 aa).

The catalysed reaction is RNA(n) + a ribonucleoside 5'-triphosphate = RNA(n+1) + diphosphate. In terms of biological role, RNA-dependent RNA polymerase which replicates the viral genome. The polypeptide is RNA-directed RNA polymerase (Cryptosporidium parvum).